The primary structure comprises 361 residues: Phosphoserine aminotransferase (361 aa).

An L-glutamate-binding site is contributed by Arg42. Pyridoxal 5'-phosphate is bound by residues 76–77 (AR), Trp102, Thr153, Asp173, and Gln196. N6-(pyridoxal phosphate)lysine is present on Lys197. Pyridoxal 5'-phosphate is bound at residue 238-239 (NT).

This sequence belongs to the class-V pyridoxal-phosphate-dependent aminotransferase family. SerC subfamily. In terms of assembly, homodimer. Pyridoxal 5'-phosphate serves as cofactor.

Its subcellular location is the cytoplasm. It carries out the reaction O-phospho-L-serine + 2-oxoglutarate = 3-phosphooxypyruvate + L-glutamate. The enzyme catalyses 4-(phosphooxy)-L-threonine + 2-oxoglutarate = (R)-3-hydroxy-2-oxo-4-phosphooxybutanoate + L-glutamate. It functions in the pathway amino-acid biosynthesis; L-serine biosynthesis; L-serine from 3-phospho-D-glycerate: step 2/3. The protein operates within cofactor biosynthesis; pyridoxine 5'-phosphate biosynthesis; pyridoxine 5'-phosphate from D-erythrose 4-phosphate: step 3/5. In terms of biological role, catalyzes the reversible conversion of 3-phosphohydroxypyruvate to phosphoserine and of 3-hydroxy-2-oxo-4-phosphonooxybutanoate to phosphohydroxythreonine. The sequence is that of Phosphoserine aminotransferase from Buchnera aphidicola subsp. Acyrthosiphon pisum (strain 5A).